The following is a 674-amino-acid chain: MPSYTVTVATGSQWFAGTDDYIYLSLIGSAGCSEKHLLDKAFYNDFERGAVDSYDVTVDEELGEIYLVKIEKRKYWLHDDWYLKYITLKTPHGDYIEFPCYRWITGEGEIVLRDGRAKLARDDQIHILKQHRRKELEARQKQYRWMEWNPGFPLSIDAKCHKDLPRDIQFDSEKGVDFVLNYSKAMENLFINRFMHMFQSSWHDFADFEKIFVKISNTISERVKNHWQEDLMFGYQFLNGCNPVLIKRCTALPPKLPVTTEMVECSLERQLSLEQEVQEGNIFIVDYELLDGIDANKTDPCTHQFLAAPICLLYKNLANKIVPIAIQLNQTPGESNPIFLPTDSKYDWLLAKIWVRSSDFHVHQTITHLLRTHLVSEVFGIAMYRQLPAVHPLFKLLVAHVRFTIAINTKAREQLICEYGLFDKANATGGGGHVQMVQRAVQDLTYSSLCFPEAIKARGMDSTEDIPFYFYRDDGLLVWEAIQSFTMEVVSIYYENDQVVEEDQELQDFVKDVYVYGMRGKKASGFPKSIKSREKLSEYLTVVIFTASAQHAAVNFGQYDWCSWIPNAPPTMRAPPPTAKGVVTIEQIVDTLPDRGRSCWHLGAVWALSQFQENELFLGMYPEEHFIEKPVKEAMIRFRKNLEAIVSVIAERNKNKKLPYYYLSPDRIPNSVAI.

The PLAT domain maps to 2–118; that stretch reads PSYTVTVATG…EIVLRDGRAK (117 aa). Ca(2+)-binding residues include glycine 17, threonine 18, aspartate 19, asparagine 44, aspartate 45, glutamate 47, aspartate 79, and aspartate 80. In terms of domain architecture, Lipoxygenase spans 119–674; sequence LARDDQIHIL…PDRIPNSVAI (556 aa). The residue at position 272 (serine 272) is a Phosphoserine. Fe cation-binding residues include histidine 368 and histidine 373. Serine 524 carries the post-translational modification Phosphoserine. Histidine 551, asparagine 555, and isoleucine 674 together coordinate Fe cation.

This sequence belongs to the lipoxygenase family. In terms of assembly, homodimer. Interacts with ALOX5AP and LTC4S. Interacts with COTL1, the interaction is required for stability and efficient catalytic activity. Interacts with PIK3R1; this interaction bridges ALOX5 with CD40 after CD40 ligation in B cells and leads to the production of reactive oxygen species (ROS). Interacts (via PLAT domain) with DICER1 (via Dicer dsRNA-binding fold domain); this interaction enhances arachidonate 5-lipoxygenase activity and modifies the miRNA precursor processing activity of DICER1. The cofactor is Fe cation. Post-translationally, serine phosphorylation by MAPKAPK2 is stimulated by arachidonic acid. Phosphorylation on Ser-524 by PKA has an inhibitory effect. Phosphorylation on Ser-272 prevents export from the nucleus. Phosphorylation at Ser-524 is stimulated by 8-bromo-3',5'-cyclic AMP or prostaglandin E2. Expressed in skin Langerhans cells and their emigrated counterparts in draining lymph nodes. Highly expressed in circulating leukocytes.

Its subcellular location is the cytoplasm. The protein resides in the nucleus matrix. It is found in the nucleus membrane. The protein localises to the perinuclear region. It localises to the cytosol. Its subcellular location is the nucleus envelope. The protein resides in the nucleus intermembrane space. It carries out the reaction (5Z,8Z,11Z,14Z)-eicosatetraenoate + O2 = (5S)-hydroperoxy-(6E,8Z,11Z,14Z)-eicosatetraenoate. The catalysed reaction is (5Z,8Z,11Z,14Z)-eicosatetraenoate + O2 = leukotriene A4 + H2O. The enzyme catalyses (5Z,8Z,11Z,14Z)-eicosatetraenoate + O2 = (8S)-hydroperoxy-(5Z,9E,11Z,14Z)-eicosatetraenoate. It catalyses the reaction (5Z,8Z,11Z,14Z)-eicosatetraenoate + O2 = (12S)-hydroperoxy-(5Z,8Z,10E,14Z)-eicosatetraenoate. It carries out the reaction 18-HEPE + O2 = (5S)-hydroperoxy-18-hydroxy-(7E,9E,11Z,14Z,16E)-eicosapentaenoate. The catalysed reaction is (18R)-hydroxy-(5Z,8Z,11Z,14Z,16E)-eicosapentaenoate + O2 = (5S)-hydroperoxy-(18R)-hydroxy-(6E,8Z,11Z,14Z,16E)-eicosapentaenoate. The enzyme catalyses (18S)-hydroxy-(5Z,8Z,11Z,14Z,16E)-eicosapentaenoate + O2 = (5S)-hydroperoxy-(18S)-hydroxy-(6E,8Z,11Z,14Z,16E)-eicosapentaenoate. It catalyses the reaction (5S)-hydroperoxy-(18S)-hydroxy-(6E,8Z,11Z,14Z,16E)-eicosapentaenoate = (5S,6S)-epoxy-(18S)-hydroxy-(7E,9E,11Z,14Z,16E)-eicosapentaenoate + H2O. It carries out the reaction (5S)-hydroperoxy-(18R)-hydroxy-(6E,8Z,11Z,14Z,16E)-eicosapentaenoate = (5S,6S)-epoxy-(18R)-hydroxy-(7E,9E,11Z,14Z,16E)-eicosapentaenoate + H2O. The catalysed reaction is (5S)-hydroperoxy-18-hydroxy-(7E,9E,11Z,14Z,16E)-eicosapentaenoate = (5S,6S)-epoxy-18-hydroxy-(7E,9E,11Z,14Z,16E)-eicosapentaenoate + H2O. The enzyme catalyses (15S)-hydroxy-(5Z,8Z,11Z,13E)-eicosatetraenoate + O2 = (5S)-hydroperoxy-(15S)-hydroxy-(6E,8Z,11Z,13E)-eicosatetraenoate. It catalyses the reaction (5S)-hydroperoxy-(6E,8Z,11Z,14Z)-eicosatetraenoate = leukotriene A4 + H2O. It carries out the reaction (5Z,8Z)-eicosadienoate + O2 = (5S)-hydroperoxy-(6E,8Z)-eicosadienoate. The catalysed reaction is (12S)-hydroxy-(5Z,8Z,10E,14Z)-eicosatetraenoate + O2 = (5S)-hydroperoxy-(12S)-hydroxy-(6E,8Z,10E,14Z)-eicosatetraenoate. The enzyme catalyses (5Z,8Z,11Z,14Z,17Z)-eicosapentaenoate + O2 = 5-hydroperoxy-(6E,8Z,11Z,14Z,17Z)-eicosapentaenoate. It catalyses the reaction (4Z,7Z,10Z,13Z,16Z,19Z)-docosahexaenoate + O2 = (14S)-hydroperoxy-(4Z,7Z,10Z,12E,16Z,19Z)-docosahexaenoate. It carries out the reaction (4Z,7Z,10Z,13Z,16Z,19Z)-docosahexaenoate + O2 = (7S)-hydroperoxy-(4Z,8E,10Z,13Z,16Z,19Z)-docosahexaenoate. The catalysed reaction is (4Z,7Z,10Z,13Z,16Z,19Z)-docosahexaenoate + O2 = (17S)-hydroperoxy-(4Z,7Z,10Z,13Z,15E,19Z)-docosahexaenoate. It participates in lipid metabolism; leukotriene A4 biosynthesis. Functionally, catalyzes the oxygenation of arachidonate to 5-hydroperoxyeicosatetraenoate (5-HPETE) followed by the dehydration to 5,6- epoxyeicosatetraenoate (Leukotriene A4/LTA4), the first two steps in the biosynthesis of leukotrienes, which are potent mediators of inflammation. Also catalyzes the oxygenation of arachidonic acid into 8-hydroperoxyicosatetraenoic acid (8-HPETE) and 12-hydroperoxyicosatetraenoic acid (12-HPETE). Displays lipoxin synthase activity being able to convert (15S)-HETE into a conjugate tetraene. Although arachidonate is the preferred substrate, this enzyme can also metabolize oxidized fatty acids derived from arachidonate such as (15S)-HETE, eicosapentaenoate (EPA) such as (18R)- and (18S)-HEPE or docosahexaenoate (DHA) which lead to the formation of specialized pro-resolving mediators (SPM) lipoxin and resolvins E and D respectively, therefore it participates in anti-inflammatory responses. Oxidation of DHA directly inhibits endothelial cell proliferation and sprouting angiogenesis via peroxisome proliferator-activated receptor gamma (PPARgamma). It does not catalyze the oxygenation of linoleic acid and does not convert (5S)-HETE to lipoxin isomers. In addition to inflammatory processes, participates in dendritic cell migration, wound healing through an antioxidant mechanism based on heme oxygenase-1 (HO-1) regulation expression, monocyte adhesion to the endothelium via ITGAM expression on monocytes. Moreover, it helps establish an adaptive humoral immunity by regulating primary resting B cells and follicular helper T cells and participates in the CD40-induced production of reactive oxygen species (ROS) after CD40 ligation in B cells through interaction with PIK3R1 that bridges ALOX5 with CD40. May also play a role in glucose homeostasis, regulation of insulin secretion and palmitic acid-induced insulin resistance via AMPK. Can regulate bone mineralization and fat cell differentiation increases in induced pluripotent stem cells. The protein is Polyunsaturated fatty acid 5-lipoxygenase of Mus musculus (Mouse).